Here is a 446-residue protein sequence, read N- to C-terminus: Maltoporin (446 aa).

An N-terminal signal peptide occupies residues 1–25; it reads MMITLRKLPLAVAVAAGVMSAQAMA.

It belongs to the porin LamB (TC 1.B.3) family. Homotrimer formed of three 18-stranded antiparallel beta-barrels, containing three independent channels.

The protein localises to the cell outer membrane. The catalysed reaction is beta-maltose(in) = beta-maltose(out). Its function is as follows. Involved in the transport of maltose and maltodextrins. The sequence is that of Maltoporin from Escherichia coli (strain K12 / MC4100 / BW2952).